Here is an 800-residue protein sequence, read N- to C-terminus: Cation/H(+) antiporter 19 (800 aa).

The next 12 helical transmembrane spans lie at 30 to 50, 60 to 77, 92 to 112, 127 to 147, 158 to 178, 196 to 216, 224 to 244, 278 to 298, 315 to 335, 343 to 363, 375 to 395, and 408 to 428; these read FALPLIILQIVLVVVFTRLLA, RVIAEIIGGILLGPSALG, LTVLDTLANIGLLFFLFLVGL, LLIAIAGISLPFIVGVGTSFV, QLPFIVFMGVALSITAFPVLA, MSAAGVNDVAAWILLALAIAL, LVSVWVLLCGTGFVIFAVVAI, FVTDTIGIHALFGAFVVGIVA, LVSGLLLPLYFAASGLKTDVT, WGLLVLVILTTCFGKIVGTVG, AVTLGFLMNTKGLVELIVLNI, and AILVLMALFTTFITTPIVMLI. Positions 776-800 are disordered; that stretch reads ADTRPLVEEDAEYDQSSRDISDLTA. Basic and acidic residues predominate over residues 790 to 800; it reads QSSRDISDLTA.

It belongs to the monovalent cation:proton antiporter 2 (CPA2) transporter (TC 2.A.37) family. CHX (TC 2.A.37.4) subfamily. Expressed in the whole plant but preferentially in pollen.

Its subcellular location is the membrane. May operate as a cation/H(+) antiporter. The chain is Cation/H(+) antiporter 19 (CHX19) from Arabidopsis thaliana (Mouse-ear cress).